The chain runs to 118 residues: Large ribosomal subunit protein uL18 (118 aa).

This sequence belongs to the universal ribosomal protein uL18 family. Part of the 50S ribosomal subunit; part of the 5S rRNA/L5/L18/L25 subcomplex. Contacts the 5S and 23S rRNAs.

Its function is as follows. This is one of the proteins that bind and probably mediate the attachment of the 5S RNA into the large ribosomal subunit, where it forms part of the central protuberance. In Myxococcus xanthus (strain DK1622), this protein is Large ribosomal subunit protein uL18.